The primary structure comprises 65 residues: UPF0337 protein PA4738 (65 aa).

Belongs to the UPF0337 (CsbD) family.

This Pseudomonas aeruginosa (strain ATCC 15692 / DSM 22644 / CIP 104116 / JCM 14847 / LMG 12228 / 1C / PRS 101 / PAO1) protein is UPF0337 protein PA4738.